The chain runs to 242 residues: Glucosamine-6-phosphate deaminase (242 aa).

The active-site Proton acceptor; for enolization step is the D67. N137 functions as the For ring-opening step in the catalytic mechanism. The active-site Proton acceptor; for ring-opening step is the H139. The active-site For ring-opening step is the E144.

The protein belongs to the glucosamine/galactosamine-6-phosphate isomerase family. NagB subfamily.

It catalyses the reaction alpha-D-glucosamine 6-phosphate + H2O = beta-D-fructose 6-phosphate + NH4(+). It functions in the pathway amino-sugar metabolism; N-acetylneuraminate degradation; D-fructose 6-phosphate from N-acetylneuraminate: step 5/5. Its function is as follows. Catalyzes the reversible isomerization-deamination of glucosamine 6-phosphate (GlcN6P) to form fructose 6-phosphate (Fru6P) and ammonium ion. This chain is Glucosamine-6-phosphate deaminase, found in Staphylococcus saprophyticus subsp. saprophyticus (strain ATCC 15305 / DSM 20229 / NCIMB 8711 / NCTC 7292 / S-41).